A 215-amino-acid polypeptide reads, in one-letter code: Interleukin-12 subunit alpha (215 aa).

Residues 1 to 22 (MCSSRCLLFLATLAFLIHLSLA) form the signal peptide. 3 cysteine pairs are disulfide-bonded: C33–C106, C60–C192, and C81–C119. N-linked (GlcNAc...) asparagine glycosylation is present at N89.

The protein belongs to the IL-6 superfamily. Heterodimer with IL12B; disulfide-linked. This heterodimer is known as interleukin IL-12. Heterodimer with EBI3/IL27B; not disulfide-linked. This heterodimer is known as interleukin IL-35. Interacts with NBR1; this interaction promotes IL-12 secretion.

It is found in the secreted. Heterodimerizes with IL12B to form the IL-12 cytokine or with EBI3/IL27B to form the IL-35 cytokine. IL-12 is primarily produced by professional antigen-presenting cells (APCs) such as B-cells and dendritic cells (DCs) as well as macrophages and granulocytes and regulates T-cell and natural killer-cell responses, induces the production of interferon-gamma (IFN-gamma), favors the differentiation of T-helper 1 (Th1) cells and is an important link between innate resistance and adaptive immunity. Mechanistically, exerts its biological effects through a receptor composed of IL12R1 and IL12R2 subunits. Binding to the receptor results in the rapid tyrosine phosphorylation of a number of cellular substrates including the JAK family kinases TYK2 and JAK2. In turn, recruited STAT4 gets phosphorylated and translocates to the nucleus where it regulates cytokine/growth factor responsive genes. As part of IL-35, plays essential roles in maintaining the immune homeostasis of the liver microenvironment and also functions as an immune-suppressive cytokine. Mediates biological events through unconventional receptors composed of IL12RB2 and gp130/IL6ST heterodimers or homodimers. Signaling requires the transcription factors STAT1 and STAT4, which form a unique heterodimer that binds to distinct DNA sites. This chain is Interleukin-12 subunit alpha (IL12A), found in Sigmodon hispidus (Hispid cotton rat).